The primary structure comprises 487 residues: Glutamyl-tRNA(Gln) amidotransferase subunit A (487 aa).

Active-site charge relay system residues include Lys-79 and Ser-154. Catalysis depends on Ser-178, which acts as the Acyl-ester intermediate.

This sequence belongs to the amidase family. GatA subfamily. As to quaternary structure, heterotrimer of A, B and C subunits.

It carries out the reaction L-glutamyl-tRNA(Gln) + L-glutamine + ATP + H2O = L-glutaminyl-tRNA(Gln) + L-glutamate + ADP + phosphate + H(+). In terms of biological role, allows the formation of correctly charged Gln-tRNA(Gln) through the transamidation of misacylated Glu-tRNA(Gln) in organisms which lack glutaminyl-tRNA synthetase. The reaction takes place in the presence of glutamine and ATP through an activated gamma-phospho-Glu-tRNA(Gln). In Moorella thermoacetica (strain ATCC 39073 / JCM 9320), this protein is Glutamyl-tRNA(Gln) amidotransferase subunit A.